The following is a 556-amino-acid chain: 2-succinyl-5-enolpyruvyl-6-hydroxy-3-cyclohexene-1-carboxylate synthase (556 aa).

This sequence belongs to the TPP enzyme family. MenD subfamily. In terms of assembly, homodimer. It depends on Mg(2+) as a cofactor. Mn(2+) serves as cofactor. Thiamine diphosphate is required as a cofactor.

The enzyme catalyses isochorismate + 2-oxoglutarate + H(+) = 5-enolpyruvoyl-6-hydroxy-2-succinyl-cyclohex-3-ene-1-carboxylate + CO2. It participates in quinol/quinone metabolism; 1,4-dihydroxy-2-naphthoate biosynthesis; 1,4-dihydroxy-2-naphthoate from chorismate: step 2/7. It functions in the pathway quinol/quinone metabolism; menaquinone biosynthesis. Catalyzes the thiamine diphosphate-dependent decarboxylation of 2-oxoglutarate and the subsequent addition of the resulting succinic semialdehyde-thiamine pyrophosphate anion to isochorismate to yield 2-succinyl-5-enolpyruvyl-6-hydroxy-3-cyclohexene-1-carboxylate (SEPHCHC). The protein is 2-succinyl-5-enolpyruvyl-6-hydroxy-3-cyclohexene-1-carboxylate synthase of Staphylococcus epidermidis (strain ATCC 12228 / FDA PCI 1200).